Here is a 130-residue protein sequence, read N- to C-terminus: uncharacterized protein (130 aa).

The segment at 76-102 is disordered; the sequence is RKCKNGPSPNKRGSASGCSRRGGGRGS.

This is an uncharacterized protein from Saccharomyces cerevisiae (strain ATCC 204508 / S288c) (Baker's yeast).